Reading from the N-terminus, the 65-residue chain is MPKMKTKSSAKKRLKVLGGGGFKRAHAFKRHILTKKTTKNKRQLRGTSMVDATNVASVRAMMPYA.

The protein belongs to the bacterial ribosomal protein bL35 family.

This chain is Large ribosomal subunit protein bL35, found in Chromobacterium violaceum (strain ATCC 12472 / DSM 30191 / JCM 1249 / CCUG 213 / NBRC 12614 / NCIMB 9131 / NCTC 9757 / MK).